Here is a 468-residue protein sequence, read N- to C-terminus: Glutamate--tRNA ligase 2 (468 aa).

The short motif at 9-19 is the 'HIGH' region element; sequence PSPTGFLHIGG. Residues 238 to 242 carry the 'KMSKS' region motif; sequence KLSKR. Lys-241 contacts ATP.

This sequence belongs to the class-I aminoacyl-tRNA synthetase family. Glutamate--tRNA ligase type 1 subfamily. Monomer.

The protein resides in the cytoplasm. It carries out the reaction tRNA(Glu) + L-glutamate + ATP = L-glutamyl-tRNA(Glu) + AMP + diphosphate. Functionally, catalyzes the attachment of glutamate to tRNA(Glu) in a two-step reaction: glutamate is first activated by ATP to form Glu-AMP and then transferred to the acceptor end of tRNA(Glu). The sequence is that of Glutamate--tRNA ligase 2 from Rhodospirillum rubrum (strain ATCC 11170 / ATH 1.1.1 / DSM 467 / LMG 4362 / NCIMB 8255 / S1).